We begin with the raw amino-acid sequence, 337 residues long: GTP 3',8-cyclase (337 aa).

The Radical SAM core domain maps to 17–243 (PFQRQYYYLR…HKSHTDGPAK (227 aa)). A GTP-binding site is contributed by Arg26. Cys33 and Cys37 together coordinate [4Fe-4S] cluster. Residue Tyr39 participates in S-adenosyl-L-methionine binding. Residue Cys40 coordinates [4Fe-4S] cluster. Arg76 lines the GTP pocket. Gly80 lines the S-adenosyl-L-methionine pocket. Thr107 contributes to the GTP binding site. An S-adenosyl-L-methionine-binding site is contributed by Ser131. Lys168 provides a ligand contact to GTP. Position 202 (Met202) interacts with S-adenosyl-L-methionine. 2 residues coordinate [4Fe-4S] cluster: Cys265 and Cys268. 270–272 (RLR) provides a ligand contact to GTP. Cys282 is a binding site for [4Fe-4S] cluster.

The protein belongs to the radical SAM superfamily. MoaA family. Monomer and homodimer. [4Fe-4S] cluster is required as a cofactor.

It carries out the reaction GTP + AH2 + S-adenosyl-L-methionine = (8S)-3',8-cyclo-7,8-dihydroguanosine 5'-triphosphate + 5'-deoxyadenosine + L-methionine + A + H(+). The protein operates within cofactor biosynthesis; molybdopterin biosynthesis. Functionally, catalyzes the cyclization of GTP to (8S)-3',8-cyclo-7,8-dihydroguanosine 5'-triphosphate. The sequence is that of GTP 3',8-cyclase from Haemophilus influenzae (strain 86-028NP).